We begin with the raw amino-acid sequence, 307 residues long: N-acetylmuramic acid 6-phosphate etherase (307 aa).

The region spanning 62–225 is the SIS domain; the sequence is VVDAFRVGGR…TTASMIRIGK (164 aa). Residue glutamate 90 is the Proton donor of the active site. The active site involves glutamate 121.

The protein belongs to the GCKR-like family. MurNAc-6-P etherase subfamily. Homodimer.

The enzyme catalyses N-acetyl-D-muramate 6-phosphate + H2O = N-acetyl-D-glucosamine 6-phosphate + (R)-lactate. It participates in amino-sugar metabolism; 1,6-anhydro-N-acetylmuramate degradation. The protein operates within amino-sugar metabolism; N-acetylmuramate degradation. Its pathway is cell wall biogenesis; peptidoglycan recycling. In terms of biological role, specifically catalyzes the cleavage of the D-lactyl ether substituent of MurNAc 6-phosphate, producing GlcNAc 6-phosphate and D-lactate. Together with AnmK, is also required for the utilization of anhydro-N-acetylmuramic acid (anhMurNAc) either imported from the medium or derived from its own cell wall murein, and thus plays a role in cell wall recycling. This is N-acetylmuramic acid 6-phosphate etherase from Brucella anthropi (strain ATCC 49188 / DSM 6882 / CCUG 24695 / JCM 21032 / LMG 3331 / NBRC 15819 / NCTC 12168 / Alc 37) (Ochrobactrum anthropi).